A 348-amino-acid chain; its full sequence is Calcium-gated potassium channel TvoK (348 aa).

A run of 3 helical transmembrane segments spans residues 19-39, 52-72, and 80-100; these read LTKV…LEFL, YFTA…GDVV, and VVAM…TATI. Positions 120–246 constitute an RCK N-terminal domain; the sequence is KNHTIICNWN…VSAGATEVLS (127 aa). The region spanning 266–348 is the RCK C-terminal domain; sequence DFILKSLSET…KKEVEEAIKG (83 aa).

As to quaternary structure, heterooctamer composed of four full-length subunits and four soluble RCK domains.

Its subcellular location is the cell membrane. Its function is as follows. Calcium-gated potassium channel. Can also be activated by Mg(2+), Mn(2+) and Ni(2+). The protein is Calcium-gated potassium channel TvoK of Thermoplasma volcanium (strain ATCC 51530 / DSM 4299 / JCM 9571 / NBRC 15438 / GSS1).